Reading from the N-terminus, the 209-residue chain is Uridine kinase (209 aa).

Residue 12 to 19 (GGSGGGKT) coordinates ATP.

The protein belongs to the uridine kinase family.

It localises to the cytoplasm. It catalyses the reaction uridine + ATP = UMP + ADP + H(+). The catalysed reaction is cytidine + ATP = CMP + ADP + H(+). It functions in the pathway pyrimidine metabolism; CTP biosynthesis via salvage pathway; CTP from cytidine: step 1/3. Its pathway is pyrimidine metabolism; UMP biosynthesis via salvage pathway; UMP from uridine: step 1/1. This Streptococcus agalactiae serotype V (strain ATCC BAA-611 / 2603 V/R) protein is Uridine kinase.